Consider the following 441-residue polypeptide: MRLSQYFLPLLKENPKEAEIISHRLMLRAGMIRQQTSGIYSWLPLGKKVLDKVCKIIREEQERAGAVEILMPTVQSADLWRESGRYDDYGLEMLRIKDRQKRDLLYGPTNEEMVTDIFRSYVHSYKDLPLNLYHIQWKFRDEIRPRFGVMRSREFLMKDAYSFDLDYEGSKTSYNRMFVAYLRTFSCLGLKAIPMRADTGPIGGELSHEFIILAETGESAIFCDKKFFELTVPHSSIDFSDKAVLANIVKQWTSFYAATEEMHNEEEWAKVSDNDRLSARGIEVGHIFHFGTKYSAPMGAKVMGQDGKEHLVSMGSYGIGPSRLVAAVIEASHDENGIIWPKSIAPFDFGIINMKPNDEKCTRACETLYSGLMQAGFDPLLDDRNERPGSKFATMDLIGLPTQIIVGPKSIAQNEVEIKDRKTGVKKSLTVENVLNQFFRI.

Belongs to the class-II aminoacyl-tRNA synthetase family. ProS type 2 subfamily. As to quaternary structure, homodimer.

The protein localises to the cytoplasm. It carries out the reaction tRNA(Pro) + L-proline + ATP = L-prolyl-tRNA(Pro) + AMP + diphosphate. Functionally, catalyzes the attachment of proline to tRNA(Pro) in a two-step reaction: proline is first activated by ATP to form Pro-AMP and then transferred to the acceptor end of tRNA(Pro). The protein is Proline--tRNA ligase of Bartonella quintana (strain Toulouse) (Rochalimaea quintana).